A 213-amino-acid chain; its full sequence is Nicolin-1 (213 aa).

As to quaternary structure, part of the neuronal tubulin polyglutamylase complex which contains TPGS1, TPGS2, TTLL1, LRRC49 and NICN1. In terms of tissue distribution, high expression level is found in brain, testis, liver and kidney. Weak expression in spleen, leukocytes, small intestine and colon.

The protein resides in the nucleus. This Homo sapiens (Human) protein is Nicolin-1 (NICN1).